We begin with the raw amino-acid sequence, 405 residues long: Serpin H1 (405 aa).

The first 15 residues, 1–15, serve as a signal peptide directing secretion; that stretch reads MQIFLVLALCGLAAA. N-linked (GlcNAc...) asparagine glycans are attached at residues Asn-107 and Asn-112. A Prevents secretion from ER motif is present at residues 402-405; that stretch reads RDEL.

This sequence belongs to the serpin family.

The protein localises to the endoplasmic reticulum lumen. In terms of biological role, binds specifically to collagen. Could be involved as a chaperone in the biosynthetic pathway of collagen. The sequence is that of Serpin H1 (SERPINH1) from Gallus gallus (Chicken).